The primary structure comprises 387 residues: 3-ketoacyl-CoA thiolase FadA (387 aa).

Cys-91 serves as the catalytic Acyl-thioester intermediate. Catalysis depends on proton acceptor residues His-343 and Cys-373.

It belongs to the thiolase-like superfamily. Thiolase family. Heterotetramer of two alpha chains (FadB) and two beta chains (FadA).

Its subcellular location is the cytoplasm. It catalyses the reaction an acyl-CoA + acetyl-CoA = a 3-oxoacyl-CoA + CoA. It functions in the pathway lipid metabolism; fatty acid beta-oxidation. In terms of biological role, catalyzes the final step of fatty acid oxidation in which acetyl-CoA is released and the CoA ester of a fatty acid two carbons shorter is formed. Involved in the aerobic and anaerobic degradation of long-chain fatty acids. The polypeptide is 3-ketoacyl-CoA thiolase FadA (fadA) (Escherichia coli (strain K12)).